Here is a 121-residue protein sequence, read N- to C-terminus: Large ribosomal subunit protein uL18 (121 aa).

The protein belongs to the universal ribosomal protein uL18 family. In terms of assembly, part of the 50S ribosomal subunit; part of the 5S rRNA/L5/L18/L25 subcomplex. Contacts the 5S and 23S rRNAs.

In terms of biological role, this is one of the proteins that bind and probably mediate the attachment of the 5S RNA into the large ribosomal subunit, where it forms part of the central protuberance. In Paraburkholderia xenovorans (strain LB400), this protein is Large ribosomal subunit protein uL18.